Here is a 175-residue protein sequence, read N- to C-terminus: Ribosome maturation factor RimM (175 aa).

In terms of domain architecture, PRC barrel spans 99–172 (SIEFTWEHFI…KLTMIIPDGL (74 aa)).

This sequence belongs to the RimM family. As to quaternary structure, binds ribosomal protein uS19.

The protein resides in the cytoplasm. An accessory protein needed during the final step in the assembly of 30S ribosomal subunit, possibly for assembly of the head region. Essential for efficient processing of 16S rRNA. May be needed both before and after RbfA during the maturation of 16S rRNA. It has affinity for free ribosomal 30S subunits but not for 70S ribosomes. This is Ribosome maturation factor RimM from Porphyromonas gingivalis (strain ATCC BAA-308 / W83).